The primary structure comprises 509 residues: MNNTISPGEVLRVIKERIENFDNQVKADSVGEVISIKDGIAIVYGLEKAKFGEVVVFTNGVTGIVLGLDCDTASVVIFGNERSVGEGDTAKCTGKLMDVPVGFELLGRVVDALGNPIDGAGNVDSKIRLPVEIKAPGIIARQSVSEPLQTGIKVIDMLIPIGRGQRELIIGDRKTGKTAIAIDTIINQKLHNDTVSEKEKVYCIYVAIGQKNSAIARIVDKLRVSGALEYTIVVAAGASDTVSFQYLAPYAACAMGEFFRDNGMHCLIVYDDLSKHAVAYRQMSLLLRRPPGREAYPGDVFFLHSRLLERAAKMSDEKGAGSLTALPIIETQAGDVSAYVPTNVISITDGQIFLESEIFYKGFRPAVNVGLSVSRVGSAAQIKSVKKVAGSVKLSLAQYRELEDFAKFGSDIDVHSKKVLDRGRRMMELLKQKQYSPLSVAEQVAVIFAGTSGCLDDISVNNVGKFEEMLLKELNENYPDVLSNISNNFTDDVKDLLLDIISKVTSSFK.

An ATP-binding site is contributed by 171 to 178 (GDRKTGKT).

The protein belongs to the ATPase alpha/beta chains family. F-type ATPases have 2 components, CF(1) - the catalytic core - and CF(0) - the membrane proton channel. CF(1) has five subunits: alpha(3), beta(3), gamma(1), delta(1), epsilon(1). CF(0) has three main subunits: a(1), b(2) and c(9-12). The alpha and beta chains form an alternating ring which encloses part of the gamma chain. CF(1) is attached to CF(0) by a central stalk formed by the gamma and epsilon chains, while a peripheral stalk is formed by the delta and b chains.

The protein localises to the cell inner membrane. It catalyses the reaction ATP + H2O + 4 H(+)(in) = ADP + phosphate + 5 H(+)(out). Functionally, produces ATP from ADP in the presence of a proton gradient across the membrane. The alpha chain is a regulatory subunit. The protein is ATP synthase subunit alpha of Ehrlichia canis (strain Jake).